Reading from the N-terminus, the 130-residue chain is Small ribosomal subunit protein uS11 (130 aa).

The protein belongs to the universal ribosomal protein uS11 family. As to quaternary structure, part of the 30S ribosomal subunit. Interacts with proteins S7 and S18. Binds to IF-3.

Its function is as follows. Located on the platform of the 30S subunit, it bridges several disparate RNA helices of the 16S rRNA. Forms part of the Shine-Dalgarno cleft in the 70S ribosome. The polypeptide is Small ribosomal subunit protein uS11 (Thermotoga maritima (strain ATCC 43589 / DSM 3109 / JCM 10099 / NBRC 100826 / MSB8)).